The chain runs to 393 residues: NADH-quinone oxidoreductase subunit H 2 (393 aa).

The next 10 helical transmembrane spans lie at 13–33 (VLVT…IVLV), 79–99 (AIFW…FAVI), 112–132 (VGLL…ILGG), 158–178 (LAFA…QGIV), 186–206 (VWGI…YIIA), 240–260 (LYFL…VTLF), 278–298 (LNYG…FTLI), 309–329 (VLLG…IPMV), 333–353 (MIGL…MIWF), and 368–388 (IGWK…AVLG).

Belongs to the complex I subunit 1 family. In terms of assembly, NDH-1 is composed of 14 different subunits. Subunits NuoA, H, J, K, L, M, N constitute the membrane sector of the complex.

The protein resides in the cell inner membrane. The enzyme catalyses a quinone + NADH + 5 H(+)(in) = a quinol + NAD(+) + 4 H(+)(out). In terms of biological role, NDH-1 shuttles electrons from NADH, via FMN and iron-sulfur (Fe-S) centers, to quinones in the respiratory chain. The immediate electron acceptor for the enzyme in this species is believed to be ubiquinone. Couples the redox reaction to proton translocation (for every two electrons transferred, four hydrogen ions are translocated across the cytoplasmic membrane), and thus conserves the redox energy in a proton gradient. This subunit may bind ubiquinone. The polypeptide is NADH-quinone oxidoreductase subunit H 2 (Solibacter usitatus (strain Ellin6076)).